A 221-amino-acid polypeptide reads, in one-letter code: MVSFTSIITAAVAATGALAAPATDVSLVARQNTPNGEGTHNGCFWSWWSDGGARATYTNGAGGSYSVSWGSGGNLVGGKGWNPGTARTITYSGTYNYNGNSYLAVYGWTRNPLVEYYVVENFGTYDPSSQSQNKGTVTSDGSSYKIAQSTRTNQPSIDGTRTFQQYWSVRQNKRSSGSVNMKTHFDAWASKGMNLGQHYYQIVATEGYFSTGNAQITVNCP.

An N-terminal signal peptide occupies residues 1–30 (MVSFTSIITAAVAATGALAAPATDVSLVAR). A GH11 domain is found at 31–219 (QNTPNGEGTH…STGNAQITVN (189 aa)). Glu115 acts as the Nucleophile in catalysis. The interval 126–157 (DPSSQSQNKGTVTSDGSSYKIAQSTRTNQPSI) is disordered. Residue Glu206 is the Proton donor of the active site.

The protein belongs to the glycosyl hydrolase 11 (cellulase G) family. The N-terminus is blocked.

The protein resides in the secreted. The catalysed reaction is Endohydrolysis of (1-&gt;4)-beta-D-xylosidic linkages in xylans.. Its pathway is glycan degradation; xylan degradation. In terms of biological role, major xylan-degrading enzyme. Contributes to the hydrolysis of arabinoxylan, the major component of maize cell-walls. This is Endo-1,4-beta-xylanase I (XYL1) from Cochliobolus carbonum (Maize leaf spot fungus).